Consider the following 202-residue polypeptide: CASP-like protein 2B1 (202 aa).

The Cytoplasmic segment spans residues 1-29; sequence MSYLGVGVSPGNVPVYHGTNLKVVDRRVR. The helical transmembrane segment at 30 to 50 threads the bilayer; it reads LAELVLRCVICGLGILAAVLV. The Extracellular portion of the chain corresponds to 51–72; that stretch reads GTDTQVKVIFTIQKKAKFTDMK. Residues 73-93 form a helical membrane-spanning segment; that stretch reads ALVFLVIANGIAAAYSLIQGL. Over 94 to 109 the chain is Cytoplasmic; that stretch reads RCVVSMVRGSVLFSKP. A helical transmembrane segment spans residues 110–130; it reads LAWAIFSGDQVIAYLTLAAVA. Over 131-164 the chain is Extracellular; that stretch reads AAAQSSVFGEFGQPELQWMKICNMYGKFCNQVGE. The helical transmembrane segment at 165–185 threads the bilayer; that stretch reads GIVSAVGVSLSMVILSGISAF. The Cytoplasmic segment spans residues 186–202; the sequence is SLFRLYGGNKGTSGGRW.

The protein belongs to the Casparian strip membrane proteins (CASP) family. In terms of assembly, homodimer and heterodimers.

The protein localises to the cell membrane. The chain is CASP-like protein 2B1 from Vitis vinifera (Grape).